Here is a 102-residue protein sequence, read N- to C-terminus: Colipase-like protein 2 (102 aa).

The signal sequence occupies residues 1–23 (MAFTQALVTVLALLAGTLPHRHS). 5 disulfides stabilise this stretch: cysteine 36-cysteine 47, cysteine 42-cysteine 58, cysteine 46-cysteine 80, cysteine 68-cysteine 88, and cysteine 82-cysteine 99.

Belongs to the colipase family.

The protein localises to the secreted. The protein is Colipase-like protein 2 (Clpsl2) of Mus musculus (Mouse).